A 114-amino-acid chain; its full sequence is Fumarate reductase subunit D (114 aa).

3 helical membrane-spanning segments follow: residues 24–44 (ISALAFPVLILILGILLPLGI), 49–69 (GIIAFAHHWFGKLVILVLTIF), and 94–114 (LIFYGLAVLYTVVAIWGVASI).

It belongs to the FrdD family. Part of an enzyme complex containing four subunits: a flavoprotein (FrdA), an iron-sulfur protein (FrdB), and two hydrophobic anchor proteins (FrdC and FrdD).

It is found in the cell inner membrane. Its function is as follows. Anchors the catalytic components of the fumarate reductase complex to the cell membrane, binds quinones. The polypeptide is Fumarate reductase subunit D (Actinobacillus succinogenes (strain ATCC 55618 / DSM 22257 / CCUG 43843 / 130Z)).